The sequence spans 124 residues: Glycine cleavage system H protein (124 aa).

Residues 19 to 101 (VATVGITDHA…ESGAWFFRMT (83 aa)) enclose the Lipoyl-binding domain. K60 is modified (N6-lipoyllysine).

It belongs to the GcvH family. As to quaternary structure, the glycine cleavage system is composed of four proteins: P, T, L and H. It depends on (R)-lipoate as a cofactor.

Its function is as follows. The glycine cleavage system catalyzes the degradation of glycine. The H protein shuttles the methylamine group of glycine from the P protein to the T protein. The protein is Glycine cleavage system H protein of Acidiphilium cryptum (strain JF-5).